The following is an 89-amino-acid chain: Small ribosomal subunit protein bS20 (89 aa).

Basic residues predominate over residues 1 to 12; it reads MANIKSAKKRAK. Positions 1 to 22 are disordered; sequence MANIKSAKKRAKQTIVRNERNT.

The protein belongs to the bacterial ribosomal protein bS20 family.

Functionally, binds directly to 16S ribosomal RNA. The chain is Small ribosomal subunit protein bS20 from Xanthomonas oryzae pv. oryzae (strain KACC10331 / KXO85).